The sequence spans 455 residues: Anaerobic glycerol-3-phosphate dehydrogenase subunit B (455 aa).

This sequence belongs to the anaerobic G-3-P dehydrogenase subunit B family. As to quaternary structure, composed of a catalytic GlpA/B dimer and of membrane bound GlpC. It depends on FMN as a cofactor.

It carries out the reaction a quinone + sn-glycerol 3-phosphate = dihydroxyacetone phosphate + a quinol. It functions in the pathway polyol metabolism; glycerol degradation via glycerol kinase pathway; glycerone phosphate from sn-glycerol 3-phosphate (anaerobic route): step 1/1. Conversion of glycerol 3-phosphate to dihydroxyacetone. Uses fumarate or nitrate as electron acceptor. This Aliivibrio fischeri (strain ATCC 700601 / ES114) (Vibrio fischeri) protein is Anaerobic glycerol-3-phosphate dehydrogenase subunit B.